We begin with the raw amino-acid sequence, 299 residues long: Mitochondrial 2-oxodicarboxylate carrier (299 aa).

Solcar repeat units lie at residues Arg11–Leu100, Ser107–Met196, and Leu205–Trp294. 6 helical membrane passes run Ile17–Val37, Phe70–Val89, Ala113–Val133, Gly167–Phe187, Leu205–Asn225, and Leu277–Glu297.

The protein belongs to the mitochondrial carrier (TC 2.A.29) family. As to expression, expressed in placenta, gall bladder and colon.

Its subcellular location is the mitochondrion inner membrane. The enzyme catalyses 2-oxoadipate(in) + 2-oxoglutarate(out) = 2-oxoadipate(out) + 2-oxoglutarate(in). The catalysed reaction is hexanedioate(in) + 2-oxoglutarate(out) = hexanedioate(out) + 2-oxoglutarate(in). It carries out the reaction L-2-aminoadipate(in) + 2-oxoglutarate(out) = L-2-aminoadipate(out) + 2-oxoglutarate(in). It catalyses the reaction glutarate(in) + 2-oxoglutarate(out) = glutarate(out) + 2-oxoglutarate(in). The enzyme catalyses 2-oxoheptanedioate(in) + 2-oxoglutarate(out) = 2-oxoheptanedioate(out) + 2-oxoglutarate(in). The catalysed reaction is heptanedioate(in) + 2-oxoglutarate(out) = heptanedioate(out) + 2-oxoglutarate(in). It carries out the reaction citrate(in) + 2-oxoglutarate(out) = citrate(out) + 2-oxoglutarate(in). Its function is as follows. Transports dicarboxylates across the inner membranes of mitochondria by a counter-exchange mechanism. Can transport 2-oxoadipate (2-oxohexanedioate), 2-oxoglutarate, adipate (hexanedioate), glutarate, and to a lesser extent, pimelate (heptanedioate), 2-oxopimelate (2-oxoheptanedioate), 2-aminoadipate (2-aminohexanedioate), oxaloacetate, and citrate. Plays a central role in catabolism of lysine, hydroxylysine, and tryptophan, by transporting common metabolite intermediates (such as 2-oxoadipate) into the mitochondria, where it is converted into acetyl-CoA and can enter the citric acid (TCA) cycle. This is Mitochondrial 2-oxodicarboxylate carrier (SLC25A21) from Homo sapiens (Human).